A 206-amino-acid chain; its full sequence is Small ribosomal subunit protein uS4 (206 aa).

The S4 RNA-binding domain maps to 98–164; that stretch reads MRLDNVVYRL…EKFKTFIENP (67 aa).

The protein belongs to the universal ribosomal protein uS4 family. Part of the 30S ribosomal subunit. Contacts protein S5. The interaction surface between S4 and S5 is involved in control of translational fidelity.

In terms of biological role, one of the primary rRNA binding proteins, it binds directly to 16S rRNA where it nucleates assembly of the body of the 30S subunit. Its function is as follows. With S5 and S12 plays an important role in translational accuracy. This Clostridium tetani (strain Massachusetts / E88) protein is Small ribosomal subunit protein uS4.